The primary structure comprises 380 residues: uncharacterized protein (380 aa).

The segment at 251-275 (NMSERPPTPSHDTASSSTSTDPNPL) is disordered. The span at 260–272 (SHDTASSSTSTDP) shows a compositional bias: low complexity.

This is an uncharacterized protein from Allium cepa var. aggregatum (Shallot).